We begin with the raw amino-acid sequence, 450 residues long: UDP-N-acetylmuramoylalanine--D-glutamate ligase (450 aa).

Residue 115–121 coordinates ATP; it reads GTNGKTT.

Belongs to the MurCDEF family.

The protein resides in the cytoplasm. The enzyme catalyses UDP-N-acetyl-alpha-D-muramoyl-L-alanine + D-glutamate + ATP = UDP-N-acetyl-alpha-D-muramoyl-L-alanyl-D-glutamate + ADP + phosphate + H(+). It functions in the pathway cell wall biogenesis; peptidoglycan biosynthesis. Cell wall formation. Catalyzes the addition of glutamate to the nucleotide precursor UDP-N-acetylmuramoyl-L-alanine (UMA). This chain is UDP-N-acetylmuramoylalanine--D-glutamate ligase, found in Lachnospira eligens (strain ATCC 27750 / DSM 3376 / VPI C15-48 / C15-B4) (Eubacterium eligens).